We begin with the raw amino-acid sequence, 287 residues long: 23S rRNA (uridine(2479)-2'-O)-methyltransferase (287 aa).

S-adenosyl-L-methionine contacts are provided by residues 210–211, Gly-232, and 252–254; these read TD and IPM.

This sequence belongs to the class IV-like SAM-binding methyltransferase superfamily. RNA methyltransferase TsnR/AvirB family. In terms of assembly, homodimer.

It catalyses the reaction uridine(2479) in 23S rRNA + S-adenosyl-L-methionine = 2'-O-methyluridine(2479) in 23S rRNA + S-adenosyl-L-homocysteine + H(+). In terms of biological role, specifically methylates the 2'-O-ribose position of uridine-2479 in 23S ribosomal RNA. Confers resistance to antibiotic avilamycin, an orthosomycin antibiotic. In Streptomyces viridochromogenes, this protein is 23S rRNA (uridine(2479)-2'-O)-methyltransferase (aviRb).